A 403-amino-acid polypeptide reads, in one-letter code: Acetylornithine aminotransferase (403 aa).

Pyridoxal 5'-phosphate-binding positions include 107–108 (GA) and Phe-140. Arg-143 contributes to the N(2)-acetyl-L-ornithine binding site. Residue 225 to 228 (DEVQ) coordinates pyridoxal 5'-phosphate. An N6-(pyridoxal phosphate)lysine modification is found at Lys-254. Ser-282 serves as a coordination point for N(2)-acetyl-L-ornithine. Thr-283 is a binding site for pyridoxal 5'-phosphate.

Belongs to the class-III pyridoxal-phosphate-dependent aminotransferase family. ArgD subfamily. As to quaternary structure, homodimer. It depends on pyridoxal 5'-phosphate as a cofactor.

It is found in the cytoplasm. The catalysed reaction is N(2)-acetyl-L-ornithine + 2-oxoglutarate = N-acetyl-L-glutamate 5-semialdehyde + L-glutamate. It functions in the pathway amino-acid biosynthesis; L-arginine biosynthesis; N(2)-acetyl-L-ornithine from L-glutamate: step 4/4. This is Acetylornithine aminotransferase from Vibrio vulnificus (strain YJ016).